The primary structure comprises 124 residues: Fluoride-specific ion channel FluC (124 aa).

Helical transmembrane passes span 5–25 (ILAVSIAGIAGTLLRFAAGTW), 37–57 (ATLAVNIVGCLIIGVLYGLFL), 69–89 (GLIVGFVGGLTTFSSFSLDTL), and 99–119 (LALGYAGISVFGGLLATWAGL). Residues glycine 76 and threonine 79 each coordinate Na(+).

Belongs to the fluoride channel Fluc/FEX (TC 1.A.43) family.

It localises to the cell inner membrane. The catalysed reaction is fluoride(in) = fluoride(out). Its activity is regulated as follows. Na(+) is not transported, but it plays an essential structural role and its presence is essential for fluoride channel function. Its function is as follows. Fluoride-specific ion channel. Important for reducing fluoride concentration in the cell, thus reducing its toxicity. The protein is Fluoride-specific ion channel FluC of Pseudomonas syringae pv. tomato (strain ATCC BAA-871 / DC3000).